A 334-amino-acid polypeptide reads, in one-letter code: HTH-type transcriptional repressor PurR (334 aa).

The HTH lacI-type domain occupies 2 to 56; sequence ATIKDVARLAGVSTTTVSHVINKTRFVAETTQEKVMKAVDELNYAPSAVARSLKC. Residues 4–23 constitute a DNA-binding region (H-T-H motif); it reads IKDVARLAGVSTTTVSHVIN. Residues 48–56 mediate DNA binding; that stretch reads SAVARSLKC. Residues phenylalanine 73, lysine 189, phenylalanine 220, and aspartate 274 each coordinate hypoxanthine.

As to quaternary structure, homodimer.

It functions in the pathway purine metabolism; purine nucleotide biosynthesis [regulation]. In terms of biological role, is the main repressor of the genes involved in the de novo synthesis of purine nucleotides, regulating purB, purC, purEK, purF, purHD, purL, purMN and guaBA expression. PurR is allosterically activated to bind its cognate DNA by binding the purine corepressors, hypoxanthine or guanine, thereby effecting transcription repression. This chain is HTH-type transcriptional repressor PurR, found in Vibrio campbellii (strain ATCC BAA-1116).